The sequence spans 599 residues: MTDLTTHDLAQPGWQTRDHLNDPVVGELCNRFGPDAFTVQATRTGIPVVWVKREQLLDVVTFLKKQPKPYVMLFDLHGMDERLRTHREGLPAADYSVFYHLISIERNRDIMLKVALAENDMHLPTVTKLFPNANWYERETWEMFGMAFDGHPNLTRIMMPKTWEGHPLRKDYPARATEFDPFELTKQKEDLEMESLTFKPEEWGMKRGTENEDFMFLNLGPNHPSSHGAFRIILQLDGEEIVDCVPDVGYHHRGAEKMGERQSWHSYIPYTDRIEYLGGCVNEMPYVLAVEKLAGIEVPDRVKTIRVMLSELFRINSHLLYISTYIQDVGAMTPVFFAFTDRQKIYDLVEAITGFRMHPAWFRIGGVAHDLPRGWERLLREFLDWMPARLDTYVKSALQNTILKGRTQGVAAYNAKEALEWGVTGAGLRATGIGFDVRKWRPYSGYENFDFEVPVGDGISDCYSRVMLKVEELRQSLRILDQCLKNMPEGPFKADHPLTTPPPKERTLQHIDTLINHFLQVSWGPVMPANESFQMVEATKGINSYYLTSDGGTMSYRTRIRTPSYAHLQQIPSVIRGCLVSDLIVYLGSIDFVMSDVDR.

The tract at residues 1–189 (MTDLTTHDLA…DPFELTKQKE (189 aa)) is NADH dehydrogenase I subunit C. The segment at 213 to 599 (DFMFLNLGPN…IDFVMSDVDR (387 aa)) is NADH dehydrogenase I subunit D.

The protein in the N-terminal section; belongs to the complex I 30 kDa subunit family. In the C-terminal section; belongs to the complex I 49 kDa subunit family. As to quaternary structure, NDH-1 is composed of 13 different subunits. Subunits NuoB, CD, E, F, and G constitute the peripheral sector of the complex.

It localises to the cell inner membrane. The enzyme catalyses a quinone + NADH + 5 H(+)(in) = a quinol + NAD(+) + 4 H(+)(out). Its function is as follows. NDH-1 shuttles electrons from NADH, via FMN and iron-sulfur (Fe-S) centers, to quinones in the respiratory chain. The immediate electron acceptor for the enzyme in this species is believed to be ubiquinone. Couples the redox reaction to proton translocation (for every two electrons transferred, four hydrogen ions are translocated across the cytoplasmic membrane), and thus conserves the redox energy in a proton gradient. This is NADH-quinone oxidoreductase subunit C/D from Pectobacterium atrosepticum (strain SCRI 1043 / ATCC BAA-672) (Erwinia carotovora subsp. atroseptica).